The following is a 107-amino-acid chain: Integration host factor subunit alpha (107 aa).

Belongs to the bacterial histone-like protein family. In terms of assembly, heterodimer of an alpha and a beta chain.

This protein is one of the two subunits of integration host factor, a specific DNA-binding protein that functions in genetic recombination as well as in transcriptional and translational control. This chain is Integration host factor subunit alpha, found in Mesorhizobium japonicum (strain LMG 29417 / CECT 9101 / MAFF 303099) (Mesorhizobium loti (strain MAFF 303099)).